A 342-amino-acid polypeptide reads, in one-letter code: Ketol-acid reductoisomerase (NADP(+)) (342 aa).

The region spanning 2-182 (AKIYYDDDAD…GGLRAGGIET (181 aa)) is the KARI N-terminal Rossmann domain. NADP(+) contacts are provided by residues 25-28 (YGSQ), Arg48, Ser51, Ser53, and 83-86 (DQNQ). His108 is an active-site residue. Position 134 (Gly134) interacts with NADP(+). In terms of domain architecture, KARI C-terminal knotted spans 183-328 (SFREETETDL…KELRKMYSWL (146 aa)). The Mg(2+) site is built by Asp191, Glu195, Glu227, and Glu231. Ser252 contributes to the substrate binding site.

This sequence belongs to the ketol-acid reductoisomerase family. Mg(2+) serves as cofactor.

The catalysed reaction is (2R)-2,3-dihydroxy-3-methylbutanoate + NADP(+) = (2S)-2-acetolactate + NADPH + H(+). It catalyses the reaction (2R,3R)-2,3-dihydroxy-3-methylpentanoate + NADP(+) = (S)-2-ethyl-2-hydroxy-3-oxobutanoate + NADPH + H(+). Its pathway is amino-acid biosynthesis; L-isoleucine biosynthesis; L-isoleucine from 2-oxobutanoate: step 2/4. It participates in amino-acid biosynthesis; L-valine biosynthesis; L-valine from pyruvate: step 2/4. In terms of biological role, involved in the biosynthesis of branched-chain amino acids (BCAA). Catalyzes an alkyl-migration followed by a ketol-acid reduction of (S)-2-acetolactate (S2AL) to yield (R)-2,3-dihydroxy-isovalerate. In the isomerase reaction, S2AL is rearranged via a Mg-dependent methyl migration to produce 3-hydroxy-3-methyl-2-ketobutyrate (HMKB). In the reductase reaction, this 2-ketoacid undergoes a metal-dependent reduction by NADPH to yield (R)-2,3-dihydroxy-isovalerate. The chain is Ketol-acid reductoisomerase (NADP(+)) from Cutibacterium acnes (strain DSM 16379 / KPA171202) (Propionibacterium acnes).